A 517-amino-acid polypeptide reads, in one-letter code: UDP-N-acetylmuramyl-tripeptide synthetase (517 aa).

Residue Thr-48 coordinates UDP-N-acetyl-alpha-D-muramoyl-L-alanyl-D-glutamate. An ATP-binding site is contributed by 125 to 131 (GTKGKTT). UDP-N-acetyl-alpha-D-muramoyl-L-alanyl-D-glutamate-binding positions include 169 to 170 (TT), Ser-196, and Arg-204. Position 238 is an N6-carboxylysine (Lys-238).

The protein belongs to the MurCDEF family. MurE subfamily. In terms of processing, carboxylation is probably crucial for Mg(2+) binding and, consequently, for the gamma-phosphate positioning of ATP.

It is found in the cytoplasm. It functions in the pathway cell wall biogenesis; peptidoglycan biosynthesis. Its function is as follows. Catalyzes the addition of an amino acid to the nucleotide precursor UDP-N-acetylmuramoyl-L-alanyl-D-glutamate (UMAG) in the biosynthesis of bacterial cell-wall peptidoglycan. This Bifidobacterium longum (strain NCC 2705) protein is UDP-N-acetylmuramyl-tripeptide synthetase.